The following is a 930-amino-acid chain: Isoleucine--tRNA ligase (930 aa).

Residues 57–67 (PYANGNIHVGH) carry the 'HIGH' region motif. E554 is an L-isoleucyl-5'-AMP binding site. Positions 595 to 599 (KMSKS) match the 'KMSKS' region motif. K598 contributes to the ATP binding site. Residues C888, C891, C908, and C911 each contribute to the Zn(2+) site.

It belongs to the class-I aminoacyl-tRNA synthetase family. IleS type 1 subfamily. Monomer. Zn(2+) serves as cofactor.

It localises to the cytoplasm. The enzyme catalyses tRNA(Ile) + L-isoleucine + ATP = L-isoleucyl-tRNA(Ile) + AMP + diphosphate. Functionally, catalyzes the attachment of isoleucine to tRNA(Ile). As IleRS can inadvertently accommodate and process structurally similar amino acids such as valine, to avoid such errors it has two additional distinct tRNA(Ile)-dependent editing activities. One activity is designated as 'pretransfer' editing and involves the hydrolysis of activated Val-AMP. The other activity is designated 'posttransfer' editing and involves deacylation of mischarged Val-tRNA(Ile). The sequence is that of Isoleucine--tRNA ligase from Streptococcus pneumoniae (strain ATCC 700669 / Spain 23F-1).